Reading from the N-terminus, the 133-residue chain is Mediator of RNA polymerase II transcription subunit 10 (133 aa).

The span at 1–13 (MSTEASTGETPEF) shows a compositional bias: polar residues. A disordered region spans residues 1-28 (MSTEASTGETPEFQSYDHRGSPTQEAMK). Positions 15–28 (SYDHRGSPTQEAMK) are enriched in basic and acidic residues.

This sequence belongs to the Mediator complex subunit 10 family. In terms of assembly, component of the Mediator complex.

It localises to the nucleus. Its function is as follows. Component of the Mediator complex, a coactivator involved in the regulated transcription of nearly all RNA polymerase II-dependent genes. Mediator functions as a bridge to convey information from gene-specific regulatory proteins to the basal RNA polymerase II transcription machinery. Mediator is recruited to promoters by direct interactions with regulatory proteins and serves as a scaffold for the assembly of a functional preinitiation complex with RNA polymerase II and the general transcription factors. This Phaeosphaeria nodorum (strain SN15 / ATCC MYA-4574 / FGSC 10173) (Glume blotch fungus) protein is Mediator of RNA polymerase II transcription subunit 10 (NUT2).